The following is a 303-amino-acid chain: MYYGFDIGGTKIALGVFDSTRRLQWEKRVPTPHTSYSAFLDAVCELVEEADQRFGVKGSVGIGIPGMPETEDGTLYAANVPAASGKPLRADLSARLDRDVRLDNDANCFALSEAWDDEFTQYPLVMGLILGTGVGGGLVLNGKPITGQSYITGEFGHMRLPVDALTLMGFDFPLRRCGCGQMGCIENYLSGRGFAWLYQHYYDQSLQAPEIIALWEQGDEQAHAHVERYLDLLAVCLGNILTIVDPDLLVIGGGLSNFTAITTQLAERLPRHLLPVARAPRIERARHGDAGGMRGAAFLHLTD.

Residues 4–11 (GFDIGGTK) and 133–140 (GVGGGLVL) each bind ATP. Zn(2+) contacts are provided by His-157, Cys-177, Cys-179, and Cys-184.

It belongs to the ROK (NagC/XylR) family. NagK subfamily.

It carries out the reaction N-acetyl-D-glucosamine + ATP = N-acetyl-D-glucosamine 6-phosphate + ADP + H(+). Its pathway is cell wall biogenesis; peptidoglycan recycling. Functionally, catalyzes the phosphorylation of N-acetyl-D-glucosamine (GlcNAc) derived from cell-wall degradation, yielding GlcNAc-6-P. The polypeptide is N-acetyl-D-glucosamine kinase (Salmonella newport (strain SL254)).